A 458-amino-acid chain; its full sequence is Argininosuccinate lyase (458 aa).

The protein belongs to the lyase 1 family. Argininosuccinate lyase subfamily.

It localises to the cytoplasm. It catalyses the reaction 2-(N(omega)-L-arginino)succinate = fumarate + L-arginine. The protein operates within amino-acid biosynthesis; L-arginine biosynthesis; L-arginine from L-ornithine and carbamoyl phosphate: step 3/3. The polypeptide is Argininosuccinate lyase (Salmonella choleraesuis (strain SC-B67)).